The primary structure comprises 171 residues: Ribosome maturation factor RimM (171 aa).

The PRC barrel domain maps to 96-170 (PDSYYHFQLE…TMTVRLPDGL (75 aa)).

The protein belongs to the RimM family. In terms of assembly, binds ribosomal protein uS19.

It localises to the cytoplasm. An accessory protein needed during the final step in the assembly of 30S ribosomal subunit, possibly for assembly of the head region. Essential for efficient processing of 16S rRNA. May be needed both before and after RbfA during the maturation of 16S rRNA. It has affinity for free ribosomal 30S subunits but not for 70S ribosomes. The protein is Ribosome maturation factor RimM of Heliobacterium modesticaldum (strain ATCC 51547 / Ice1).